Reading from the N-terminus, the 662-residue chain is uncharacterized protein (662 aa).

5 disordered regions span residues 1–94, 107–237, 288–328, 406–440, and 506–580; these read MSQR…NENN, DHNN…VKYH, ETTS…TPSA, QSSF…PIQM, and QNSI…MVSP. The segment covering 25–49 has biased composition (low complexity); that stretch reads TTTTTPTPTTTTTTTSSLSSSTSST. Residues 77-87 are compositionally biased toward basic and acidic residues; that stretch reads DNIKLDNEKTF. Over residues 109–161 the composition is skewed to low complexity; the sequence is NNNNNNNNNNNNNNNNNNNNNNNNNNNNNNNNNNNNNNNNNNNNNNNNNNNNN. Residues 162–176 are compositionally biased toward polar residues; that stretch reads DTQKGTNKNENNCTD. Positions 183 to 196 are enriched in low complexity; that stretch reads STSTTSSSETGSST. Positions 203–212 are enriched in polar residues; it reads KTPQSCLKKS. A compositionally biased stretch (low complexity) spans 213 to 224; the sequence is NNNNNDNNNNNN. Basic residues predominate over residues 226 to 235; sequence KTPRSTKKVK. Low complexity-rich tracts occupy residues 288-308, 413-434, 515-526, and 535-575; these read ETTS…TPIP, PTNN…TTTP, PTKSSSSTSIQQ, and NINN…NNNN.

This is an uncharacterized protein from Dictyostelium discoideum (Social amoeba).